Consider the following 840-residue polypeptide: Probable alpha-glucuronidase A (840 aa).

An N-terminal signal peptide occupies residues 1 to 19; the sequence is MWSGIPIFALLSSIGIAAA. N-linked (GlcNAc...) asparagine glycans are attached at residues Asn50, Asn149, Asn222, Asn262, Asn279, Asn310, Asn465, Asn527, Asn576, Asn610, Asn682, Asn723, and Asn732.

Belongs to the glycosyl hydrolase 67 family.

It is found in the secreted. It catalyses the reaction an alpha-D-glucuronoside + H2O = D-glucuronate + an alcohol. Its function is as follows. Alpha-glucuronidase involved in the hydrolysis of xylan, a major structural heterogeneous polysaccharide found in plant biomass representing the second most abundant polysaccharide in the biosphere, after cellulose. Releases 4-O-methylglucuronic acid from xylan. This Aspergillus fumigatus (strain CBS 144.89 / FGSC A1163 / CEA10) (Neosartorya fumigata) protein is Probable alpha-glucuronidase A (aguA).